The primary structure comprises 269 residues: Shikimate dehydrogenase (NADP(+)) (269 aa).

Shikimate-binding positions include 17-19 (SKS) and Thr-64. Catalysis depends on Lys-68, which acts as the Proton acceptor. Position 80 (Asp-80) interacts with NADP(+). Positions 89 and 105 each coordinate shikimate. Residues 130–134 (GAGGA), 154–159 (NRTRAK), and Met-213 each bind NADP(+). Shikimate is bound at residue Tyr-215. An NADP(+)-binding site is contributed by Gly-237.

This sequence belongs to the shikimate dehydrogenase family. Homodimer.

The catalysed reaction is shikimate + NADP(+) = 3-dehydroshikimate + NADPH + H(+). The protein operates within metabolic intermediate biosynthesis; chorismate biosynthesis; chorismate from D-erythrose 4-phosphate and phosphoenolpyruvate: step 4/7. Involved in the biosynthesis of the chorismate, which leads to the biosynthesis of aromatic amino acids. Catalyzes the reversible NADPH linked reduction of 3-dehydroshikimate (DHSA) to yield shikimate (SA). The chain is Shikimate dehydrogenase (NADP(+)) from Neisseria meningitidis serogroup C (strain 053442).